The sequence spans 272 residues: tRNA pseudouridine synthase A (272 aa).

Asp52 (nucleophile) is an active-site residue. Substrate is bound at residue Tyr110.

It belongs to the tRNA pseudouridine synthase TruA family. As to quaternary structure, homodimer.

The enzyme catalyses uridine(38/39/40) in tRNA = pseudouridine(38/39/40) in tRNA. In terms of biological role, formation of pseudouridine at positions 38, 39 and 40 in the anticodon stem and loop of transfer RNAs. This is tRNA pseudouridine synthase A from Cupriavidus taiwanensis (strain DSM 17343 / BCRC 17206 / CCUG 44338 / CIP 107171 / LMG 19424 / R1) (Ralstonia taiwanensis (strain LMG 19424)).